The sequence spans 402 residues: Type II NADH:quinone oxidoreductase (402 aa).

Residues 12–16 (GAGYA), 39–40 (NK), and valine 83 each bind FAD. Glutamate 172 is a catalytic residue. FAD-binding positions include aspartate 302, 319-320 (AQ), and lysine 379.

This sequence belongs to the NADH dehydrogenase family. FAD is required as a cofactor.

The protein resides in the cell membrane. It carries out the reaction a quinone + NADH + H(+) = a quinol + NAD(+). Alternative, nonproton pumping NADH:quinone oxidoreductase that delivers electrons to the respiratory chain by oxidation of NADH and reduction of quinones, and contributes to the regeneration of NAD(+). The polypeptide is Type II NADH:quinone oxidoreductase (Staphylococcus aureus (strain bovine RF122 / ET3-1)).